The following is a 689-amino-acid chain: Methionine--tRNA ligase (689 aa).

Positions 15 to 25 (PYANGPVHIGH) match the 'HIGH' region motif. Zn(2+)-binding residues include Cys147, Cys150, Cys160, and Cys163. The 'KMSKS' region motif lies at 342–346 (KISTS). Thr345 is a binding site for ATP. The tRNA-binding domain maps to 588–689 (DFAKMDIRVA…AVVNAGSMIG (102 aa)).

It belongs to the class-I aminoacyl-tRNA synthetase family. MetG type 1 subfamily. Homodimer. Zn(2+) serves as cofactor.

The protein localises to the cytoplasm. The catalysed reaction is tRNA(Met) + L-methionine + ATP = L-methionyl-tRNA(Met) + AMP + diphosphate. Is required not only for elongation of protein synthesis but also for the initiation of all mRNA translation through initiator tRNA(fMet) aminoacylation. The chain is Methionine--tRNA ligase from Cytophaga hutchinsonii (strain ATCC 33406 / DSM 1761 / CIP 103989 / NBRC 15051 / NCIMB 9469 / D465).